A 353-amino-acid chain; its full sequence is Phosphate acyltransferase (353 aa).

It belongs to the PlsX family. In terms of assembly, homodimer. Probably interacts with PlsY.

It is found in the cytoplasm. The enzyme catalyses a fatty acyl-[ACP] + phosphate = an acyl phosphate + holo-[ACP]. Its pathway is lipid metabolism; phospholipid metabolism. In terms of biological role, catalyzes the reversible formation of acyl-phosphate (acyl-PO(4)) from acyl-[acyl-carrier-protein] (acyl-ACP). This enzyme utilizes acyl-ACP as fatty acyl donor, but not acyl-CoA. This chain is Phosphate acyltransferase, found in Rhodopseudomonas palustris (strain BisB18).